A 629-amino-acid polypeptide reads, in one-letter code: Phosphatidylinositol-3,5-bisphosphate 3-phosphatase MTMR8 (629 aa).

The region spanning 126–500 is the Myotubularin phosphatase domain; sequence GWKLIDLKVD…FSFQFWCGMY (375 aa). The a 1,2-diacyl-sn-glycero-3-phospho-(1D-myo-inositol-3,5-bisphosphate) site is built by Asn250, Asn275, and Ile276. The a 1,2-diacyl-sn-glycero-3-phospho-(1D-myo-inositol-3-phosphate) site is built by Asn250, Asn275, and Ile276. The active-site Phosphocysteine intermediate is Cys338. Residues Ser339, Asp340, Gly341, Trp342, Asp343, Arg344, Lys380, and Arg384 each contribute to the a 1,2-diacyl-sn-glycero-3-phospho-(1D-myo-inositol-3,5-bisphosphate) site. A 1,2-diacyl-sn-glycero-3-phospho-(1D-myo-inositol-3-phosphate) is bound by residues Ser339, Asp340, Gly341, Trp342, Asp343, and Arg344. Ser339 and Asp340 together coordinate phosphate. Trp342, Asp343, and Arg344 together coordinate phosphate. Arg384 contacts a 1,2-diacyl-sn-glycero-3-phospho-(1D-myo-inositol-3-phosphate). Positions 517–543 form a coiled coil; that stretch reads LLSCMNQKIKLEDNASELENKLPFLDG.

Belongs to the protein-tyrosine phosphatase family. Non-receptor class myotubularin subfamily. In terms of assembly, homodimer.

It localises to the nucleus envelope. The enzyme catalyses a 1,2-diacyl-sn-glycero-3-phospho-(1D-myo-inositol-3,5-bisphosphate) + H2O = a 1,2-diacyl-sn-glycero-3-phospho-(1D-myo-inositol-5-phosphate) + phosphate. It carries out the reaction a 1,2-diacyl-sn-glycero-3-phospho-(1D-myo-inositol-3-phosphate) + H2O = a 1,2-diacyl-sn-glycero-3-phospho-(1D-myo-inositol) + phosphate. The catalysed reaction is 1,2-dioctanoyl-sn-glycero-3-phospho-(1D-myo-inositol-3,5-bisphosphate) + H2O = 1,2-dioctanoyl-sn-glycero-3-phospho-(1D-myo-inositol-5-phosphate) + phosphate. Lipid phosphatase that specifically dephosphorylates the D-3 position of phosphatidylinositol 3-phosphate and phosphatidylinositol 3,5-bisphosphate, generating phosphatidylinositol and phosphatidylinositol 5-phosphate. This is Phosphatidylinositol-3,5-bisphosphate 3-phosphatase MTMR8 from Gallus gallus (Chicken).